Reading from the N-terminus, the 37-residue chain is Potassium channel toxin alpha-KTx 1.13 (37 aa).

Residue Q1 is modified to Pyrrolidone carboxylic acid. 3 cysteine pairs are disulfide-bonded: C7–C28, C13–C33, and C17–C35. The interaction with Ca(2+)-activated K(+) channels stretch occupies residues 26–33 (GKCMNKKC).

This sequence belongs to the short scorpion toxin superfamily. Potassium channel inhibitor family. Alpha-KTx 01 subfamily. Expressed by the venom gland.

It localises to the secreted. Its function is as follows. Potent selective inhibitor of high conductance (maxi-K), different medium and small conductance calcium-activated potassium channels (KCa1.1/KCNMA1 and others), as well as a voltage-dependent potassium channel (Kv1.3/KCNA3&gt;Kv1.2/KCNA2&gt;Kv1.6/KCNA3&gt;&gt;Shaker/Sh). It blocks channel activity by a simple bimolecular inhibition process. Functionally, has a pH-specific antimicrobial activity against bacteria (B.subtilis, E.coli and S.aureus) and the fungus C.albicans. The polypeptide is Potassium channel toxin alpha-KTx 1.13 (Leiurus hebraeus (Hebrew deathstalker scorpion)).